Reading from the N-terminus, the 880-residue chain is Translation initiation factor IF-2 (880 aa).

Basic and acidic residues-rich tracts occupy residues 180–194 (QEAA…EAAK) and 202–228 (LAEE…DHHI). A disordered region spans residues 180–289 (QEAATKRKQD…APESMAHGFN (110 aa)). Residues 249-262 (GRRARNKSNAKKRG) are compositionally biased toward basic residues. The 170-residue stretch at 380 to 549 (SRAPVVTIMG…LLQAEVLELK (170 aa)) folds into the tr-type G domain. Positions 389–396 (GHVDHGKT) are G1. 389–396 (GHVDHGKT) contributes to the GTP binding site. The G2 stretch occupies residues 414–418 (GITQH). The interval 435 to 438 (DTPG) is G3. Residues 435–439 (DTPGH) and 489–492 (NKMD) each bind GTP. Residues 489 to 492 (NKMD) are G4. Residues 525–527 (SAK) form a G5 region.

This sequence belongs to the TRAFAC class translation factor GTPase superfamily. Classic translation factor GTPase family. IF-2 subfamily.

Its subcellular location is the cytoplasm. One of the essential components for the initiation of protein synthesis. Protects formylmethionyl-tRNA from spontaneous hydrolysis and promotes its binding to the 30S ribosomal subunits. Also involved in the hydrolysis of GTP during the formation of the 70S ribosomal complex. This chain is Translation initiation factor IF-2, found in Shewanella baltica (strain OS223).